The primary structure comprises 240 residues: Probable septum site-determining protein MinC (240 aa).

It belongs to the MinC family. As to quaternary structure, interacts with MinD and FtsZ.

Functionally, cell division inhibitor that blocks the formation of polar Z ring septums. Rapidly oscillates between the poles of the cell to destabilize FtsZ filaments that have formed before they mature into polar Z rings. Prevents FtsZ polymerization. This chain is Probable septum site-determining protein MinC, found in Acinetobacter baumannii (strain ACICU).